Consider the following 118-residue polypeptide: Putative membrane protein insertion efficiency factor (118 aa).

The protein belongs to the UPF0161 family.

The protein localises to the cell inner membrane. Could be involved in insertion of integral membrane proteins into the membrane. The protein is Putative membrane protein insertion efficiency factor of Helicobacter pylori (strain HPAG1).